We begin with the raw amino-acid sequence, 308 residues long: UPF0282 protein SSO3251 (308 aa).

The protein belongs to the UPF0282 family.

The chain is UPF0282 protein SSO3251 from Saccharolobus solfataricus (strain ATCC 35092 / DSM 1617 / JCM 11322 / P2) (Sulfolobus solfataricus).